Here is a 515-residue protein sequence, read N- to C-terminus: Sphingolipid 10-desaturase (515 aa).

A helical membrane pass occupies residues 3 to 23 (AVWALLWALQLGTLVGCALVL). In terms of domain architecture, Cytochrome b5 heme-binding spans 46–113 (AKPISDQKAA…DISFVFRVMH (68 aa)). 2 residues coordinate heme: His-90 and His-113. A helical transmembrane segment spans residues 198–218 (TWLLWNTAVLISIIALSVISM). The Histidine box-1 signature appears at 245–249 (HDAEH). The helical transmembrane segment at 258–278 (LNDILGWIYGTVFLGVNGAWW) threads the bilayer. The short motif at 281-286 (EHREHH) is the Histidine box-2 element. Transmembrane regions (helical) follow at residues 322 to 342 (IIHF…FIVG), 359 to 379 (PWTI…LSQT), and 382 to 402 (PIPV…QLLG). Positions 447–451 (HYSHH) match the Histidine box-3 motif.

The protein belongs to the fatty acid desaturase type 1 family. Fe(2+) serves as cofactor.

It localises to the membrane. It carries out the reaction a (4E,8E)-4-sphinga-4,8-dienine ceramide + 2 Fe(II)-[cytochrome b5] + O2 + 2 H(+) = an N-acyl-(4E,8E,10E)-sphingatrienine + 2 Fe(III)-[cytochrome b5] + 2 H2O. Its pathway is lipid metabolism; sphingolipid metabolism. Functionally, fatty acid desaturase that catalyzes the introduction of the third double bond at the Delta(10) position in d18:3Delta4,8,10 triunsaturated sphingolipid long fatty acid chains. The cytochrome b5 domain probably acts as the direct electron donor to the active site of the desaturase. This chain is Sphingolipid 10-desaturase, found in Thalassiosira pseudonana (Marine diatom).